We begin with the raw amino-acid sequence, 239 residues long: uncharacterized protein (239 aa).

An HTH cro/C1-type domain is found at 13 to 66 (IEYLVDKLNGPSEFARKTGVTLSTITRWRKGEADPSRSNLVKIAEVTGVSIEWL). The H-T-H motif DNA-binding region spans 24-43 (SEFARKTGVTLSTITRWRKG).

This is an uncharacterized protein from Haemophilus influenzae (strain ATCC 51907 / DSM 11121 / KW20 / Rd).